We begin with the raw amino-acid sequence, 289 residues long: Membrane protein insertase YidC (289 aa).

Residues 1 to 19 (MKKKALLPLLLGIMVFLAG) form the signal peptide. The N-palmitoyl cysteine moiety is linked to residue cysteine 20. Cysteine 20 carries S-diacylglycerol cysteine lipidation. Helical transmembrane passes span 55–75 (YGLA…PFML), 133–153 (MLGC…FFVL), 177–197 (IWIT…STFS), 210–230 (MIIS…ALGL), and 231–251 (YWSV…AYYS). A disordered region spans residues 268–289 (EHGGSGNSKGAKVVSKKNKKKK).

This sequence belongs to the OXA1/ALB3/YidC family. Type 2 subfamily.

It localises to the cell membrane. Functionally, required for the insertion and/or proper folding and/or complex formation of integral membrane proteins into the membrane. Involved in integration of membrane proteins that insert both dependently and independently of the Sec translocase complex, as well as at least some lipoproteins. This chain is Membrane protein insertase YidC, found in Staphylococcus carnosus (strain TM300).